We begin with the raw amino-acid sequence, 81 residues long: uncharacterized protein (81 aa).

Positions 46–81 are disordered; that stretch reads ASSPVVKRKSLVKRKSPVKRSPLKKRSQMRTSPCEA. Residues 51–73 are compositionally biased toward basic residues; the sequence is VKRKSLVKRKSPVKRSPLKKRSQ.

This is an uncharacterized protein from Frog virus 3 (isolate Goorha) (FV-3).